A 261-amino-acid chain; its full sequence is Hydroxyethylthiazole kinase (261 aa).

Position 38 (Met-38) interacts with substrate. The ATP site is built by Arg-114 and Thr-159. Gly-186 provides a ligand contact to substrate.

Belongs to the Thz kinase family. Mg(2+) is required as a cofactor.

The enzyme catalyses 5-(2-hydroxyethyl)-4-methylthiazole + ATP = 4-methyl-5-(2-phosphooxyethyl)-thiazole + ADP + H(+). It participates in cofactor biosynthesis; thiamine diphosphate biosynthesis; 4-methyl-5-(2-phosphoethyl)-thiazole from 5-(2-hydroxyethyl)-4-methylthiazole: step 1/1. Catalyzes the phosphorylation of the hydroxyl group of 4-methyl-5-beta-hydroxyethylthiazole (THZ). The polypeptide is Hydroxyethylthiazole kinase (Halalkalibacterium halodurans (strain ATCC BAA-125 / DSM 18197 / FERM 7344 / JCM 9153 / C-125) (Bacillus halodurans)).